The primary structure comprises 75 residues: Endogenous retrovirus group K member 5 Np9 protein (75 aa).

The segment at 22-43 (TAPKRQRPSRTGHDDDGGFVEK) is disordered. Positions 32–43 (TGHDDDGGFVEK) are enriched in basic and acidic residues.

The protein localises to the nucleus. Functionally, may possess a function in tumorigenesis. This chain is Endogenous retrovirus group K member 5 Np9 protein (ERVK-5), found in Homo sapiens (Human).